Consider the following 281-residue polypeptide: MKEKPIIGVTPDLAKNCQKYTYADFPWYALRRNYTDAIIAAGGIPILLPYQSDTINQLMELIDGIVIPGGDEDIHPKFYEQKYAEDLVISNEERDHFEILVLKKALEKDIPILGICRGMQLLNVMFNGTLIKHIPDYIRHFSKLTYSKKFECNTEAFATTVYTLPIKLEFENAPIKTIINHTQPKPKNIVSHTINIEVSTKLSKIANNCLQTMVNSTHHQAVNKLGNDLIISAKAEDGIVEAIEATKHKFVIGVQWHPEYLNDNGIDLQLFKALVKASKYI.

Residues 19–281 (KYTYADFPWY…KALVKASKYI (263 aa)) form the Glutamine amidotransferase type-1 domain. One can recognise an RPE1 insert domain in the interval 139 to 174 (RHFSKLTYSKKFECNTEAFATTVYTLPIKLEFENAP).

This chain is Putative glutamine amidotransferase-like protein RP404, found in Rickettsia prowazekii (strain Madrid E).